The sequence spans 403 residues: S-adenosylmethionine synthase (403 aa).

H15 contributes to the ATP binding site. D17 lines the Mg(2+) pocket. Residue E43 participates in K(+) binding. L-methionine-binding residues include E56 and Q99. Positions Q99–R109 are flexible loop. ATP is bound by residues D166–K168, K232–F233, D241, R247–K248, A264, and K268. D241 is a binding site for L-methionine. Residue K272 coordinates L-methionine.

Belongs to the AdoMet synthase family. As to quaternary structure, homotetramer; dimer of dimers. It depends on Mg(2+) as a cofactor. K(+) serves as cofactor.

The protein resides in the cytoplasm. It catalyses the reaction L-methionine + ATP + H2O = S-adenosyl-L-methionine + phosphate + diphosphate. The protein operates within amino-acid biosynthesis; S-adenosyl-L-methionine biosynthesis; S-adenosyl-L-methionine from L-methionine: step 1/1. In terms of biological role, catalyzes the formation of S-adenosylmethionine (AdoMet) from methionine and ATP. The overall synthetic reaction is composed of two sequential steps, AdoMet formation and the subsequent tripolyphosphate hydrolysis which occurs prior to release of AdoMet from the enzyme. This Stenotrophomonas maltophilia (strain K279a) protein is S-adenosylmethionine synthase.